The following is a 1572-amino-acid chain: E3 ubiquitin-protein ligase HECW2 (1572 aa).

Position 48 is a phosphoserine (serine 48). A C2 domain is found at 167 to 301 (GAEGMEGGAS…QAIGDQMLSY (135 aa)). Disordered regions lie at residues 341–452 (VNSV…SSFP) and 489–796 (IMFS…PSVR). Residues 400–410 (TSTSSRTSPPR) are compositionally biased toward low complexity. Over residues 518–532 (ASTHEAASFEDKPEN) the composition is skewed to basic and acidic residues. 4 stretches are compositionally biased toward polar residues: residues 572–588 (EVDQPTSGADTGTSDAS), 597–614 (ETESLDQGSEPSQVSSET), 643–664 (SSCNESVTTQLSSVDTRCSSLE), and 688–703 (PTSSGPAEGSQESVCT). The interaction with TP73 stretch occupies residues 737–1068 (WQRRGSLEGA…PRPSSTFNTV (332 aa)). The segment covering 744–776 (EGAAAAAESPPQEEGSAGEAQGTCEGATAQEEG) has biased composition (low complexity). The 34-residue stretch at 807 to 840 (EALPPNWEARIDSHGRIFYVDHVNRTTTWQRPTA) folds into the WW 1 domain. Residues 847-874 (LQRSNSIQQMEQLNRRYQSIRRTMTNER) adopt a coiled-coil conformation. Phosphoserine is present on residues serine 852 and serine 909. Residues 985–1018 (LELPRGWEMKHDHQGKAFFVDHNSRTTTFIDPRL) form the WW 2 domain. Disordered stretches follow at residues 1024–1069 (RPTS…NTVS) and 1161–1187 (CQSPRGSPVSSPQNSPGTQRANARAPA). Basic residues predominate over residues 1031–1040 (HRQHLTRQRS). The segment covering 1161–1181 (CQSPRGSPVSSPQNSPGTQRA) has biased composition (polar residues). Phosphoserine is present on serine 1175. Residues 1237-1572 (SRKDLQRNKL…VEETSTFGLE (336 aa)) enclose the HECT domain. The Glycyl thioester intermediate role is filled by cysteine 1540.

As to quaternary structure, interacts with TP73. Interacts with FZR1. In terms of processing, ubiquitinated and degraded during mitotic exit by APC/C-Cdh1. In terms of tissue distribution, predominantly expressed in adult brain, lung and heart.

It is found in the cytoplasm. Its subcellular location is the cytoskeleton. The protein resides in the spindle. The catalysed reaction is S-ubiquitinyl-[E2 ubiquitin-conjugating enzyme]-L-cysteine + [acceptor protein]-L-lysine = [E2 ubiquitin-conjugating enzyme]-L-cysteine + N(6)-ubiquitinyl-[acceptor protein]-L-lysine.. The protein operates within protein modification; protein ubiquitination. In terms of biological role, E3 ubiquitin-protein ligase that mediates ubiquitination of TP73. Acts to stabilize TP73 and enhance activation of transcription by TP73. Involved in the regulation of mitotic metaphase/anaphase transition. The sequence is that of E3 ubiquitin-protein ligase HECW2 (HECW2) from Homo sapiens (Human).